The following is a 130-amino-acid chain: Small ribosomal subunit protein uS9 (130 aa).

It belongs to the universal ribosomal protein uS9 family.

The chain is Small ribosomal subunit protein uS9 from Streptococcus gordonii (strain Challis / ATCC 35105 / BCRC 15272 / CH1 / DL1 / V288).